Consider the following 249-residue polypeptide: Esterase YjfP (249 aa).

Functionally, displays esterase activity toward palmitoyl-CoA and pNP-butyrate. In Escherichia coli (strain K12), this protein is Esterase YjfP (yjfP).